The chain runs to 418 residues: Serine hydroxymethyltransferase (418 aa).

(6S)-5,6,7,8-tetrahydrofolate is bound by residues leucine 120 and 124–126; that span reads GHL. Lysine 229 carries the N6-(pyridoxal phosphate)lysine modification. 353-355 serves as a coordination point for (6S)-5,6,7,8-tetrahydrofolate; that stretch reads SPF.

Belongs to the SHMT family. As to quaternary structure, homodimer. Pyridoxal 5'-phosphate is required as a cofactor.

The protein resides in the cytoplasm. The enzyme catalyses (6R)-5,10-methylene-5,6,7,8-tetrahydrofolate + glycine + H2O = (6S)-5,6,7,8-tetrahydrofolate + L-serine. It functions in the pathway one-carbon metabolism; tetrahydrofolate interconversion. Its pathway is amino-acid biosynthesis; glycine biosynthesis; glycine from L-serine: step 1/1. Catalyzes the reversible interconversion of serine and glycine with tetrahydrofolate (THF) serving as the one-carbon carrier. This reaction serves as the major source of one-carbon groups required for the biosynthesis of purines, thymidylate, methionine, and other important biomolecules. Also exhibits THF-independent aldolase activity toward beta-hydroxyamino acids, producing glycine and aldehydes, via a retro-aldol mechanism. This Psychrobacter arcticus (strain DSM 17307 / VKM B-2377 / 273-4) protein is Serine hydroxymethyltransferase.